The chain runs to 286 residues: Beta-lactamase Ohio-1 (286 aa).

Positions 1 to 21 are cleaved as a signal peptide; that stretch reads MRYFRLCIISLLATLPLRVHA. The active-site Acyl-ester intermediate is Ser-66. Cysteines 73 and 119 form a disulfide. Glu-164 serves as the catalytic Proton acceptor. 230–232 serves as a coordination point for substrate; sequence KTG.

The protein belongs to the class-A beta-lactamase family.

The catalysed reaction is a beta-lactam + H2O = a substituted beta-amino acid. The protein is Beta-lactamase Ohio-1 of Enterobacter cloacae.